Here is a 552-residue protein sequence, read N- to C-terminus: (R)-mandelonitrile lyase-like (552 aa).

The signal sequence occupies residues 1–28 (MTKRIDSSLLYTALVVLLLLGVVHRSNA). A glycan (N-linked (GlcNAc...) asparagine) is linked at Asn-44. 55-82 (DYIIVGGGTAGCPLAATLSQSFRVLLLE) is a binding site for FAD. N-linked (GlcNAc...) asparagine glycosylation is found at Asn-162, Asn-259, and Asn-434. His-492 functions as the Proton acceptor in the catalytic mechanism.

It belongs to the GMC oxidoreductase family. Monomer. It depends on FAD as a cofactor. Post-translationally, glycosylated.

It catalyses the reaction (R)-mandelonitrile = benzaldehyde + hydrogen cyanide. The protein is (R)-mandelonitrile lyase-like of Arabidopsis thaliana (Mouse-ear cress).